The primary structure comprises 145 residues: Large-conductance mechanosensitive channel (145 aa).

Helical transmembrane passes span 16–36 (VVDLAVGVIIGGAFGKIVTSF) and 83–103 (GVFINTLIDFIIIAFVIFMVI).

The protein belongs to the MscL family. In terms of assembly, homopentamer.

It localises to the cell inner membrane. In terms of biological role, channel that opens in response to stretch forces in the membrane lipid bilayer. May participate in the regulation of osmotic pressure changes within the cell. The chain is Large-conductance mechanosensitive channel from Geobacter metallireducens (strain ATCC 53774 / DSM 7210 / GS-15).